Consider the following 427-residue polypeptide: 3-phosphoshikimate 1-carboxyvinyltransferase (427 aa).

Positions 22, 23, and 27 each coordinate 3-phosphoshikimate. Position 22 (lysine 22) interacts with phosphoenolpyruvate. Residues glycine 96 and arginine 124 each coordinate phosphoenolpyruvate. 7 residues coordinate 3-phosphoshikimate: serine 169, serine 170, glutamine 171, serine 197, aspartate 313, asparagine 336, and lysine 340. Glutamine 171 contributes to the phosphoenolpyruvate binding site. Aspartate 313 acts as the Proton acceptor in catalysis. Residues arginine 344, arginine 386, and lysine 411 each coordinate phosphoenolpyruvate.

Belongs to the EPSP synthase family. Monomer.

It localises to the cytoplasm. It catalyses the reaction 3-phosphoshikimate + phosphoenolpyruvate = 5-O-(1-carboxyvinyl)-3-phosphoshikimate + phosphate. The protein operates within metabolic intermediate biosynthesis; chorismate biosynthesis; chorismate from D-erythrose 4-phosphate and phosphoenolpyruvate: step 6/7. Its function is as follows. Catalyzes the transfer of the enolpyruvyl moiety of phosphoenolpyruvate (PEP) to the 5-hydroxyl of shikimate-3-phosphate (S3P) to produce enolpyruvyl shikimate-3-phosphate and inorganic phosphate. The protein is 3-phosphoshikimate 1-carboxyvinyltransferase of Escherichia coli O17:K52:H18 (strain UMN026 / ExPEC).